The chain runs to 132 residues: Dinoflagellate viral nucleoprotein 5 (132 aa).

A compositionally biased stretch (basic residues) spans 1–44; sequence MAAMKKAMKVKKSAKKSAKKSGKKGGMKKKAKRVSKVARGKRAK. The disordered stretch occupies residues 1–84; the sequence is MAAMKKAMKV…KKQSEHGKKI (84 aa). Positions 57-66 are enriched in polar residues; that stretch reads GGLTKNSLVK.

Phosphorylated.

Its subcellular location is the nucleus. The protein resides in the chromosome. DNA-binding protein, which similarly to histones, may compact DNA into chromatin. This Hematodinium sp protein is Dinoflagellate viral nucleoprotein 5.